A 299-amino-acid polypeptide reads, in one-letter code: Oxygen-dependent coproporphyrinogen-III oxidase (299 aa).

S92 contributes to the substrate binding site. A divalent metal cation contacts are provided by H96 and H106. H106 acts as the Proton donor in catalysis. 108 to 110 (NVR) lines the substrate pocket. A divalent metal cation-binding residues include H145 and H175. The interval 240 to 275 (YVEFNLVWDRGTLFGLQTGGRTESILMSMPPLVRWE) is important for dimerization. Position 258 to 260 (258 to 260 (GGR)) interacts with substrate.

Belongs to the aerobic coproporphyrinogen-III oxidase family. Homodimer. Requires a divalent metal cation as cofactor.

It localises to the cytoplasm. The enzyme catalyses coproporphyrinogen III + O2 + 2 H(+) = protoporphyrinogen IX + 2 CO2 + 2 H2O. It functions in the pathway porphyrin-containing compound metabolism; protoporphyrin-IX biosynthesis; protoporphyrinogen-IX from coproporphyrinogen-III (O2 route): step 1/1. Its function is as follows. Involved in the heme biosynthesis. Catalyzes the aerobic oxidative decarboxylation of propionate groups of rings A and B of coproporphyrinogen-III to yield the vinyl groups in protoporphyrinogen-IX. In Citrobacter koseri (strain ATCC BAA-895 / CDC 4225-83 / SGSC4696), this protein is Oxygen-dependent coproporphyrinogen-III oxidase.